The chain runs to 429 residues: Glutamyl-tRNA reductase (429 aa).

Substrate is bound by residues 49–52 (TCNR), Ser-108, 113–115 (EAQ), and Gln-119. The active-site Nucleophile is Cys-50. Position 188–193 (188–193 (GAGEMS)) interacts with NADP(+).

This sequence belongs to the glutamyl-tRNA reductase family. Homodimer.

It carries out the reaction (S)-4-amino-5-oxopentanoate + tRNA(Glu) + NADP(+) = L-glutamyl-tRNA(Glu) + NADPH + H(+). Its pathway is porphyrin-containing compound metabolism; protoporphyrin-IX biosynthesis; 5-aminolevulinate from L-glutamyl-tRNA(Glu): step 1/2. Its function is as follows. Catalyzes the NADPH-dependent reduction of glutamyl-tRNA(Glu) to glutamate 1-semialdehyde (GSA). This Rubrobacter xylanophilus (strain DSM 9941 / JCM 11954 / NBRC 16129 / PRD-1) protein is Glutamyl-tRNA reductase.